The sequence spans 330 residues: Dimethyladenosine transferase 1, mitochondrial (330 aa).

Residues 1–84 (MAQPSARVLQ…RSILRRHPQR (84 aa)) constitute a mitochondrion transit peptide. S-adenosyl-L-methionine-binding positions include 38 to 41 (QNFL), Asn39, Leu41, Gly67, Glu89, Asp118, and Asn140.

The protein belongs to the class I-like SAM-binding methyltransferase superfamily. rRNA adenine N(6)-methyltransferase family. KsgA subfamily.

Its subcellular location is the mitochondrion. In terms of biological role, probable S-adenosyl-L-methionine-dependent methyltransferase which specifically dimethylates mitochondrial 12S rRNA at the conserved stem loop. In contrast to mtTFB2, it does not have a critical role in either transcription or regulation of the copy number of mitochondrial DNA. The sequence is that of Dimethyladenosine transferase 1, mitochondrial (mtTFB1) from Drosophila melanogaster (Fruit fly).